We begin with the raw amino-acid sequence, 257 residues long: Imidazole glycerol phosphate synthase subunit HisF (257 aa).

Catalysis depends on residues Asp-12 and Asp-131.

This sequence belongs to the HisA/HisF family. In terms of assembly, heterodimer of HisH and HisF.

It localises to the cytoplasm. It catalyses the reaction 5-[(5-phospho-1-deoxy-D-ribulos-1-ylimino)methylamino]-1-(5-phospho-beta-D-ribosyl)imidazole-4-carboxamide + L-glutamine = D-erythro-1-(imidazol-4-yl)glycerol 3-phosphate + 5-amino-1-(5-phospho-beta-D-ribosyl)imidazole-4-carboxamide + L-glutamate + H(+). The protein operates within amino-acid biosynthesis; L-histidine biosynthesis; L-histidine from 5-phospho-alpha-D-ribose 1-diphosphate: step 5/9. IGPS catalyzes the conversion of PRFAR and glutamine to IGP, AICAR and glutamate. The HisF subunit catalyzes the cyclization activity that produces IGP and AICAR from PRFAR using the ammonia provided by the HisH subunit. This Hydrogenovibrio crunogenus (strain DSM 25203 / XCL-2) (Thiomicrospira crunogena) protein is Imidazole glycerol phosphate synthase subunit HisF.